A 404-amino-acid chain; its full sequence is Ubiquitin-like modifier-activating enzyme 5 (404 aa).

S45 bears the Phosphoserine mark. The ATP site is built by G83, D104, K127, N150, and N184. Zn(2+)-binding residues include C226 and C229. C250 acts as the Glycyl thioester intermediate in catalysis. Zn(2+) contacts are provided by C303 and C308. Positions 334-346 (IIHEDNEWGIELV) match the UFM1-interacting sequence (UIS) motif. The tract at residues 347–377 (SEISEEELKKSSGPIPDLPEGIIVAYTVPQK) is linker. S358 and S393 each carry phosphoserine. The short motif at 389 to 404 (DSGESLEDLMAKMKNI) is the UFC1-binding sequence (UFC) element.

Belongs to the ubiquitin-activating E1 family. UBA5 subfamily. As to quaternary structure, homodimer; homodimerization is required for UFM1 activation. Interacts (via UIS motif) with UFM1; binds UFM1 via a trans-binding mechanism in which UFM1 interacts with distinct sites in both subunits of the UBA5 homodimer. Interacts (via C-terminus) with UFC1. Interacts (via UIS motif) with GABARAPL2 and, with lower affinity, with GABARAP and GABARAPL1.

It is found in the cytoplasm. The protein localises to the nucleus. Its subcellular location is the endoplasmic reticulum membrane. The protein resides in the golgi apparatus. In terms of biological role, E1-like enzyme which specifically catalyzes the first step in ufmylation. Activates UFM1 by first adenylating its C-terminal glycine residue with ATP, and thereafter linking this residue to the side chain of a cysteine residue in E1, yielding a UFM1-E1 thioester and free AMP. Activates UFM1 via a trans-binding mechanism, in which UFM1 interacts with distinct sites in both subunits of the UBA5 homodimer. Trans-binding also promotes stabilization of the UBA5 homodimer, and enhances ATP-binding. Transfer of UFM1 from UBA5 to the E2-like enzyme UFC1 also takes place using a trans mechanism. Ufmylation plays a key role in various processes, such as ribosome recycling, response to DNA damage, interferon response or reticulophagy (also called ER-phagy). Ufmylation is essential for erythroid differentiation of both megakaryocytes and erythrocytes. The sequence is that of Ubiquitin-like modifier-activating enzyme 5 from Bos taurus (Bovine).